A 273-amino-acid polypeptide reads, in one-letter code: Putative pyruvate, phosphate dikinase regulatory protein (273 aa).

Position 149–156 (149–156 (GPSRTSKT)) interacts with ADP.

This sequence belongs to the pyruvate, phosphate/water dikinase regulatory protein family. PDRP subfamily.

The enzyme catalyses N(tele)-phospho-L-histidyl/L-threonyl-[pyruvate, phosphate dikinase] + ADP = N(tele)-phospho-L-histidyl/O-phospho-L-threonyl-[pyruvate, phosphate dikinase] + AMP + H(+). It catalyses the reaction N(tele)-phospho-L-histidyl/O-phospho-L-threonyl-[pyruvate, phosphate dikinase] + phosphate + H(+) = N(tele)-phospho-L-histidyl/L-threonyl-[pyruvate, phosphate dikinase] + diphosphate. Bifunctional serine/threonine kinase and phosphorylase involved in the regulation of the pyruvate, phosphate dikinase (PPDK) by catalyzing its phosphorylation/dephosphorylation. In Rickettsia rickettsii (strain Iowa), this protein is Putative pyruvate, phosphate dikinase regulatory protein.